Reading from the N-terminus, the 101-residue chain is Small ribosomal subunit protein uS14 (101 aa).

This sequence belongs to the universal ribosomal protein uS14 family. In terms of assembly, part of the 30S ribosomal subunit. Contacts proteins S3 and S10.

Functionally, binds 16S rRNA, required for the assembly of 30S particles and may also be responsible for determining the conformation of the 16S rRNA at the A site. The chain is Small ribosomal subunit protein uS14 from Xylella fastidiosa (strain M23).